A 106-amino-acid polypeptide reads, in one-letter code: NADH dehydrogenase [ubiquinone] 1 alpha subcomplex subunit 8-B (106 aa).

Residue Ser2 is modified to N-acetylserine. CHCH domains follow at residues 26 to 67 (GMRC…LKDL) and 68 to 106 (HQKC…CPLK). 3 short sequence motifs (cx9C motif) span residues 29 to 39 (CMPENVAFLKC), 49 to 59 (CLDKGRDVTRC), and 71 to 81 (CQKEMDDYVGC). 4 cysteine pairs are disulfide-bonded: Cys29/Cys59, Cys39/Cys49, Cys71/Cys103, and Cys81/Cys92. A Cx10C motif motif is present at residues 92 to 103 (CRKEQEAFEKVC).

This sequence belongs to the complex I NDUFA8 subunit family. In terms of assembly, complex I is composed of at least 49 different subunits.

It localises to the mitochondrion. The protein resides in the mitochondrion intermembrane space. In terms of biological role, accessory subunit of the mitochondrial membrane respiratory chain NADH dehydrogenase (Complex I), that is believed not to be involved in catalysis. Complex I functions in the transfer of electrons from NADH to the respiratory chain. The immediate electron acceptor for the enzyme is believed to be ubiquinone. The protein is NADH dehydrogenase [ubiquinone] 1 alpha subcomplex subunit 8-B of Arabidopsis thaliana (Mouse-ear cress).